A 134-amino-acid polypeptide reads, in one-letter code: Small ribosomal subunit protein uS11 (134 aa).

The protein belongs to the universal ribosomal protein uS11 family. As to quaternary structure, component of the small ribosomal subunit.

Its subcellular location is the cytoplasm. The sequence is that of Small ribosomal subunit protein uS11 (RPS14) from Encephalitozoon cuniculi (strain GB-M1) (Microsporidian parasite).